A 560-amino-acid polypeptide reads, in one-letter code: NAD-dependent malic enzyme (560 aa).

The active-site Proton donor is tyrosine 100. Arginine 153 lines the NAD(+) pocket. The active-site Proton acceptor is the lysine 171. Residues glutamate 242, aspartate 243, and aspartate 266 each coordinate a divalent metal cation. Residues aspartate 266 and asparagine 413 each coordinate NAD(+).

It belongs to the malic enzymes family. Homotetramer. Mg(2+) serves as cofactor. Mn(2+) is required as a cofactor.

The enzyme catalyses (S)-malate + NAD(+) = pyruvate + CO2 + NADH. The catalysed reaction is oxaloacetate + H(+) = pyruvate + CO2. In Psychrobacter arcticus (strain DSM 17307 / VKM B-2377 / 273-4), this protein is NAD-dependent malic enzyme.